The primary structure comprises 86 residues: Large ribosomal subunit protein uL24 (86 aa).

The protein belongs to the universal ribosomal protein uL24 family. In terms of assembly, part of the 50S ribosomal subunit.

One of two assembly initiator proteins, it binds directly to the 5'-end of the 23S rRNA, where it nucleates assembly of the 50S subunit. Functionally, one of the proteins that surrounds the polypeptide exit tunnel on the outside of the subunit. This chain is Large ribosomal subunit protein uL24, found in Bdellovibrio bacteriovorus (strain ATCC 15356 / DSM 50701 / NCIMB 9529 / HD100).